The sequence spans 530 residues: T-complex protein 1 subunit delta (530 aa).

Polar residues predominate over residues 1-13 (MVSQAKQPSNATF). The segment at 1 to 20 (MVSQAKQPSNATFKNREKPQ) is disordered.

Belongs to the TCP-1 chaperonin family. Heterooligomeric complex of about 850 to 900 kDa that forms two stacked rings, 12 to 16 nm in diameter.

It localises to the cytoplasm. Functionally, molecular chaperone; assists the folding of proteins upon ATP hydrolysis. Known to play a role, in vitro, in the folding of actin and tubulin. This Kluyveromyces lactis (strain ATCC 8585 / CBS 2359 / DSM 70799 / NBRC 1267 / NRRL Y-1140 / WM37) (Yeast) protein is T-complex protein 1 subunit delta (CCT4).